Reading from the N-terminus, the 125-residue chain is S-adenosylmethionine decarboxylase proenzyme (125 aa).

The active-site Schiff-base intermediate with substrate; via pyruvic acid is serine 63. The residue at position 63 (serine 63) is a Pyruvic acid (Ser); by autocatalysis. The Proton acceptor; for processing activity role is filled by histidine 68. The Proton donor; for catalytic activity role is filled by cysteine 83.

This sequence belongs to the prokaryotic AdoMetDC family. Type 1 subfamily. Heterotetramer of two alpha and two beta chains arranged as a dimer of alpha/beta heterodimers. The cofactor is pyruvate. Post-translationally, is synthesized initially as an inactive proenzyme. Formation of the active enzyme involves a self-maturation process in which the active site pyruvoyl group is generated from an internal serine residue via an autocatalytic post-translational modification. Two non-identical subunits are generated from the proenzyme in this reaction, and the pyruvate is formed at the N-terminus of the alpha chain, which is derived from the carboxyl end of the proenzyme. The post-translation cleavage follows an unusual pathway, termed non-hydrolytic serinolysis, in which the side chain hydroxyl group of the serine supplies its oxygen atom to form the C-terminus of the beta chain, while the remainder of the serine residue undergoes an oxidative deamination to produce ammonia and the pyruvoyl group blocking the N-terminus of the alpha chain.

It carries out the reaction S-adenosyl-L-methionine + H(+) = S-adenosyl 3-(methylsulfanyl)propylamine + CO2. It functions in the pathway amine and polyamine biosynthesis; S-adenosylmethioninamine biosynthesis; S-adenosylmethioninamine from S-adenosyl-L-methionine: step 1/1. In terms of biological role, catalyzes the decarboxylation of S-adenosylmethionine to S-adenosylmethioninamine (dcAdoMet), the propylamine donor required for the synthesis of the polyamines spermine and spermidine from the diamine putrescine. The polypeptide is S-adenosylmethionine decarboxylase proenzyme (Moorella thermoacetica (strain ATCC 39073 / JCM 9320)).